Here is a 312-residue protein sequence, read N- to C-terminus: Protoheme IX farnesyltransferase (312 aa).

8 helical membrane passes run 33–53, 54–74, 105–125, 126–146, 154–174, 181–201, 243–263, and 291–311; these read VMLL…VSIN, PLYG…AGAL, FIFG…FVNW, FAAL…TIWL, IVIG…AATG, FLLF…LSLF, IIGF…IIFI, and FYLA…CFII.

It belongs to the UbiA prenyltransferase family. Protoheme IX farnesyltransferase subfamily.

Its subcellular location is the cell inner membrane. The enzyme catalyses heme b + (2E,6E)-farnesyl diphosphate + H2O = Fe(II)-heme o + diphosphate. The protein operates within porphyrin-containing compound metabolism; heme O biosynthesis; heme O from protoheme: step 1/1. Functionally, converts heme B (protoheme IX) to heme O by substitution of the vinyl group on carbon 2 of heme B porphyrin ring with a hydroxyethyl farnesyl side group. This Bartonella henselae (strain ATCC 49882 / DSM 28221 / CCUG 30454 / Houston 1) (Rochalimaea henselae) protein is Protoheme IX farnesyltransferase.